We begin with the raw amino-acid sequence, 215 residues long: 3-isopropylmalate dehydratase small subunit (215 aa).

It belongs to the LeuD family. LeuD type 1 subfamily. As to quaternary structure, heterodimer of LeuC and LeuD.

It catalyses the reaction (2R,3S)-3-isopropylmalate = (2S)-2-isopropylmalate. It participates in amino-acid biosynthesis; L-leucine biosynthesis; L-leucine from 3-methyl-2-oxobutanoate: step 2/4. Its function is as follows. Catalyzes the isomerization between 2-isopropylmalate and 3-isopropylmalate, via the formation of 2-isopropylmaleate. The polypeptide is 3-isopropylmalate dehydratase small subunit (Xanthomonas campestris pv. campestris (strain 8004)).